Reading from the N-terminus, the 378-residue chain is Outer membrane porin C (378 aa).

The signal sequence occupies residues 1-21 (MKVKVLSLLVPALLVAGAANA).

Belongs to the Gram-negative porin family. As to quaternary structure, homotrimer.

Its subcellular location is the cell outer membrane. Functionally, forms pores that allow passive diffusion of small molecules across the outer membrane. This is Outer membrane porin C (ompC) from Salmonella typhimurium (strain LT2 / SGSC1412 / ATCC 700720).